Consider the following 531-residue polypeptide: Flavin-containing monooxygenase 3 (531 aa).

Residues 9–13 (GAGVS), Glu32, 40–41 (LW), and 61–62 (NS) each bind FAD. Residues 60-61 (TN) and 195-198 (SGCD) contribute to the NADP(+) site. Position 401 is a phosphoserine (Ser401). Residues 511–531 (YSHFLRLLAVPVLIALFLVLI) form a helical membrane-spanning segment.

Belongs to the FMO family. FAD serves as cofactor. In terms of tissue distribution, detected in liver and kidney (at protein level). Expressed in kidney and liver. Weakly expressed in lung. Does not seem to be expressed in brain, adipose tissue, or muscle.

The protein localises to the microsome membrane. It is found in the endoplasmic reticulum membrane. The enzyme catalyses trimethylamine + NADPH + O2 = trimethylamine N-oxide + NADP(+) + H2O. The catalysed reaction is N,N-dimethylaniline + NADPH + O2 + H(+) = N,N-dimethylaniline N-oxide + NADP(+) + H2O. It carries out the reaction hypotaurine + NADPH + O2 + H(+) = taurine + NADP(+) + H2O. It catalyses the reaction (S)-nicotine + NADPH + O2 = trans-(S)-nicotine N(1')-oxide + NADP(+) + H2O. The enzyme catalyses albendazole + NADPH + O2 + H(+) = albendazole S-oxide + NADP(+) + H2O. Functionally, essential hepatic enzyme that catalyzes the oxygenation of a wide variety of nitrogen- and sulfur-containing compounds including drugs as well as dietary compounds. Plays an important role in the metabolism of trimethylamine (TMA), via the production of trimethylamine N-oxide (TMAO) metabolite. TMA is generated by the action of gut microbiota using dietary precursors such as choline, choline containing compounds, betaine or L-carnitine. By regulating TMAO concentration, FMO3 directly impacts both platelet responsiveness and rate of thrombus formation. The protein is Flavin-containing monooxygenase 3 (Fmo3) of Rattus norvegicus (Rat).